The primary structure comprises 565 residues: Methionine--tRNA ligase (565 aa).

Positions 16–26 (PYAYGVPHLGN) match the 'HIGH' region motif. Zn(2+) contacts are provided by Cys148, Cys151, Cys161, and Cys164. The 'KMSKS' region signature appears at 338 to 342 (KFSKS). An ATP-binding site is contributed by Lys341.

This sequence belongs to the class-I aminoacyl-tRNA synthetase family. MetG type 1 subfamily. Requires Zn(2+) as cofactor.

It localises to the cytoplasm. It carries out the reaction tRNA(Met) + L-methionine + ATP = L-methionyl-tRNA(Met) + AMP + diphosphate. Is required not only for elongation of protein synthesis but also for the initiation of all mRNA translation through initiator tRNA(fMet) aminoacylation. The polypeptide is Methionine--tRNA ligase (Thermofilum pendens (strain DSM 2475 / Hrk 5)).